The following is a 308-amino-acid chain: Homoserine kinase (308 aa).

85 to 95 (PLTRGLGSSAA) is an ATP binding site.

It belongs to the GHMP kinase family. Homoserine kinase subfamily.

It is found in the cytoplasm. The enzyme catalyses L-homoserine + ATP = O-phospho-L-homoserine + ADP + H(+). It functions in the pathway amino-acid biosynthesis; L-threonine biosynthesis; L-threonine from L-aspartate: step 4/5. Catalyzes the ATP-dependent phosphorylation of L-homoserine to L-homoserine phosphate. This Caldicellulosiruptor saccharolyticus (strain ATCC 43494 / DSM 8903 / Tp8T 6331) protein is Homoserine kinase.